Here is a 227-residue protein sequence, read N- to C-terminus: UPF0173 metal-dependent hydrolase BC_4613 (227 aa).

This sequence belongs to the UPF0173 family.

In Bacillus cereus (strain ATCC 14579 / DSM 31 / CCUG 7414 / JCM 2152 / NBRC 15305 / NCIMB 9373 / NCTC 2599 / NRRL B-3711), this protein is UPF0173 metal-dependent hydrolase BC_4613.